The sequence spans 414 residues: Probable 26S proteasome regulatory subunit 6B (414 aa).

Residue 202–209 coordinates ATP; that stretch reads GPPGCGKT.

Belongs to the AAA ATPase family.

It localises to the cytoplasm. It is found in the nucleus. Its function is as follows. The 26S proteasome is involved in the ATP-dependent degradation of ubiquitinated proteins. The regulatory (or ATPase) complex confers ATP dependency and substrate specificity to the 26S complex. This Caenorhabditis elegans protein is Probable 26S proteasome regulatory subunit 6B (rpt-3).